The chain runs to 139 residues: Nucleoside diphosphate kinase (139 aa).

ATP contacts are provided by lysine 10, phenylalanine 58, arginine 86, threonine 92, arginine 104, and asparagine 114. Histidine 117 functions as the Pros-phosphohistidine intermediate in the catalytic mechanism.

This sequence belongs to the NDK family. In terms of assembly, homotetramer. It depends on Mg(2+) as a cofactor.

It localises to the cytoplasm. It catalyses the reaction a 2'-deoxyribonucleoside 5'-diphosphate + ATP = a 2'-deoxyribonucleoside 5'-triphosphate + ADP. It carries out the reaction a ribonucleoside 5'-diphosphate + ATP = a ribonucleoside 5'-triphosphate + ADP. Major role in the synthesis of nucleoside triphosphates other than ATP. The ATP gamma phosphate is transferred to the NDP beta phosphate via a ping-pong mechanism, using a phosphorylated active-site intermediate. The protein is Nucleoside diphosphate kinase of Rhodococcus opacus (strain B4).